The primary structure comprises 49 residues: MLQLMKQLYEKPAVKWTCHTGFYLMILLVLFFMYGFHTANTGSYIYNDF.

A helical transmembrane segment spans residues Trp-16–Phe-36.

Its subcellular location is the cell membrane. This is an uncharacterized protein from Bacillus subtilis (strain 168).